The primary structure comprises 206 residues: Eukaryotic translation initiation factor isoform 4E-2 (206 aa).

A disulfide bridge links C103 with C142.

Belongs to the eukaryotic initiation factor 4E family. EIF4F is a multi-subunit complex, the composition of which varies with external and internal environmental conditions. It is composed of at least EIF4A, EIF4E and EIF4G. EIF4E is also known to interact with other partners. In higher plants two isoforms of EIF4F have been identified, named isoform EIF4F and isoform EIF(iso)4F. Isoform EIF4F has subunits p220 and p26, whereas isoform EIF(iso)4F has subunits p82 and p28. In terms of processing, according to the redox status, the Cys-103-Cys-142 disulfide bridge may have a role in regulating protein function by affecting its ability to bind capped mRNA.

Its function is as follows. Recognizes and binds the 7-methylguanosine-containing mRNA cap during an early step in the initiation of protein synthesis and facilitates ribosome binding by inducing the unwinding of the mRNAs secondary structures. In Oryza sativa subsp. japonica (Rice), this protein is Eukaryotic translation initiation factor isoform 4E-2.